The following is a 221-amino-acid chain: Translation initiation factor 6 (221 aa).

It belongs to the eIF-6 family.

In terms of biological role, binds to the 50S ribosomal subunit and prevents its association with the 30S ribosomal subunit to form the 70S initiation complex. The sequence is that of Translation initiation factor 6 from Methanospirillum hungatei JF-1 (strain ATCC 27890 / DSM 864 / NBRC 100397 / JF-1).